Here is a 130-residue protein sequence, read N- to C-terminus: MSKLKLEILTPNGVIYNGEALSVTLPGEEGEFGVLAEHSSLITLLEAGVIDIEKEDKSVESVLINWGVVEVDEKKVIVLVEGAVAIRGDSESAVAKALNDAKELIESIKDNNPAIATVTARLESAAQNLL.

It belongs to the ATPase epsilon chain family. F-type ATPases have 2 components, CF(1) - the catalytic core - and CF(0) - the membrane proton channel. CF(1) has five subunits: alpha(3), beta(3), gamma(1), delta(1), epsilon(1). CF(0) has three main subunits: a, b and c.

It localises to the cell inner membrane. Produces ATP from ADP in the presence of a proton gradient across the membrane. The chain is ATP synthase epsilon chain from Sulfurimonas denitrificans (strain ATCC 33889 / DSM 1251) (Thiomicrospira denitrificans (strain ATCC 33889 / DSM 1251)).